A 259-amino-acid polypeptide reads, in one-letter code: Pimeloyl-[acyl-carrier protein] methyl ester esterase (259 aa).

Positions 16-241 (FVMLHGWGMN…QSAHVPFISH (226 aa)) constitute an AB hydrolase-1 domain. Substrate is bound by residues Trp22, 82–83 (SM), and 143–147 (FLLLQ). The active-site Nucleophile is the Ser82. Catalysis depends on residues Asp207 and His235. His235 is a binding site for substrate.

This sequence belongs to the AB hydrolase superfamily. Carboxylesterase BioH family. As to quaternary structure, monomer.

The protein localises to the cytoplasm. It carries out the reaction 6-carboxyhexanoyl-[ACP] methyl ester + H2O = 6-carboxyhexanoyl-[ACP] + methanol + H(+). The protein operates within cofactor biosynthesis; biotin biosynthesis. Its function is as follows. The physiological role of BioH is to remove the methyl group introduced by BioC when the pimeloyl moiety is complete. It allows to synthesize pimeloyl-ACP via the fatty acid synthetic pathway through the hydrolysis of the ester bonds of pimeloyl-ACP esters. The sequence is that of Pimeloyl-[acyl-carrier protein] methyl ester esterase from Hamiltonella defensa subsp. Acyrthosiphon pisum (strain 5AT).